The primary structure comprises 480 residues: MSRRLRRTKIVTTLGPATDRDNNLEKVIAAGANVVRMNFSHGSPEDHKMRADKVREIAAKLGRHVAILGDLQGPKIRVSTFKEGKVFLNIGDKFLLDANLGKGEGDKEKVGIDYKGLPADVVPGDILLLDDGRVQLKVLEVQGMKVFTEVTVGGPLSNNKGINKLGGGLSAEALTEKDKADIQTAALIGVDYLAVSFPRCGEDLNYARRLARDAGCDAKIVAKVERAEAVCDQNAMDDIILASDVVMVARGDLGVEIGDPELVGIQKALIRRARQLNRAVITATQMMESMITNPMPTRAEVMDVANAVLDGTDAVMLSAETAAGQYPSETVAAMARVCLGAEKIPSINVSKHRLDVQFDNVEEAIAMSAMYAANHLKGVTAIITMTESGRTALMTSRISSGLPIFAMSRHERTLNLTALYRGVTPVHFDSAADGVVAAHEAVNLLRDKGYLVSGDLVIVTQGDVMSTVGSTNTTRILTVE.

Residue Arg36 participates in substrate binding. Positions 38, 40, and 70 each coordinate K(+). Residue 38-41 (NFSH) participates in ATP binding. ATP contacts are provided by Arg77 and Lys160. Lys223 serves as a coordination point for substrate. Position 225 (Glu225) interacts with Mg(2+). Residues Gly251, Asp252, and Thr284 each coordinate substrate. Residue Asp252 coordinates Mg(2+).

This sequence belongs to the pyruvate kinase family. In terms of assembly, homotetramer. Requires Mg(2+) as cofactor. The cofactor is K(+).

It carries out the reaction pyruvate + ATP = phosphoenolpyruvate + ADP + H(+). The protein operates within carbohydrate degradation; glycolysis; pyruvate from D-glyceraldehyde 3-phosphate: step 5/5. Allosterically activated by AMP and by several sugar phosphates. Belongs to type II PK. In terms of biological role, catalyzes the formation of pyruvate in the last step of glycolysis, it is irreversible under physiological conditions. The reaction is critical for the control of metabolic flux in the second part of glycolysis. In Salmonella typhimurium (strain LT2 / SGSC1412 / ATCC 700720), this protein is Pyruvate kinase II (pykA).